A 932-amino-acid polypeptide reads, in one-letter code: Ribosome biogenesis protein ERB1 (932 aa).

The segment covering 1-18 (MVRPSSSSSASASAARSG) has biased composition (low complexity). Residues 1-229 (MVRPSSSSSA…RSQAAQAFDL (229 aa)) are disordered. The span at 27–36 (PTATNPTTRA) shows a compositional bias: polar residues. Composition is skewed to acidic residues over residues 57–119 (VSDD…EVDS) and 150–172 (DNSDFDDDADEGDLAYDSADEDE). Residues 175 to 184 (SAFAARSDAS) are compositionally biased toward low complexity. 2 WD repeats span residues 555-594 (PDGGRVRCLSVDPTGNWLVTGGDDGRARLWDVAIGRCTAS) and 604-644 (AERS…NYAK). Positions 679–698 (SMPSKPDARSPVAWTRPSEA) are disordered. WD repeat units follow at residues 762–800 (SKGSSIQKLVFHPTKPWIFVATQRYIRIYDLMAQSLIKT), 803–842 (SGFKWISTLDVHPSGDHLMVGSYDKKLAWFDLDLSARPYK), 846–885 (YHARAIRSVHFSTSWNLVADASDDGTLQLFYAKVGADYGE), and 901–932 (KNGLGVLDVKWHPNQPWLFSAGADGNALLWTT).

This sequence belongs to the WD repeat BOP1/ERB1 family. Component of the NOP7 complex, composed of ERB1, NOP7 and YTM1. The complex is held together by ERB1, which interacts with NOP7 via its N-terminal domain and with YTM1 via a high-affinity interaction between the seven-bladed beta-propeller domains of the 2 proteins. The NOP7 complex associates with the 66S pre-ribosome.

The protein localises to the nucleus. It is found in the nucleolus. The protein resides in the nucleoplasm. Component of the NOP7 complex, which is required for maturation of the 25S and 5.8S ribosomal RNAs and formation of the 60S ribosome. The polypeptide is Ribosome biogenesis protein ERB1 (Mycosarcoma maydis (Corn smut fungus)).